The chain runs to 445 residues: MNIHNIAIIGGGLSGCECALTLAKFGFSVTLFEQKPQLFSPAHNTPLLAELVCSNSLRSNELTTGIGLLKQELRELNSPLMAIADTCRVPAGKALAVDRELFSKQVTQLIESHPKIHLIREEVSSLSTSFLEKYDRIIVATGPLASPNISNSLSTLIGDKYLYFYDAIAPIVTADSIDMSIAFWGSRYEEQGEGDYLNCPMSYEEYQIFYSSLLKGEKVTNSKVEKEIHFEGCMPIEALAERGEKTLLFGPFKPVGLINPHTGLRPYAVLQLRPENLNKSMLNLVGCQTKLTYPAQDTIFRLVPGLSNVEFVRFGSMHRNTYINSPKILTDQLALRNFPCIHLAGQITGVEGYVESIACGLWVSILLLALSKDKKILRPPKTCALGGLLEHISCPSKQFQPSNIHFGLVPEPTEKIKKKERKEWYAQRARIDFYHWLNNELIHIM.

10 to 15 (GGGLSG) is an FAD binding site.

The protein belongs to the MnmG family. TrmFO subfamily. FAD serves as cofactor.

The protein localises to the cytoplasm. It catalyses the reaction uridine(54) in tRNA + (6R)-5,10-methylene-5,6,7,8-tetrahydrofolate + NADH + H(+) = 5-methyluridine(54) in tRNA + (6S)-5,6,7,8-tetrahydrofolate + NAD(+). It carries out the reaction uridine(54) in tRNA + (6R)-5,10-methylene-5,6,7,8-tetrahydrofolate + NADPH + H(+) = 5-methyluridine(54) in tRNA + (6S)-5,6,7,8-tetrahydrofolate + NADP(+). In terms of biological role, catalyzes the folate-dependent formation of 5-methyl-uridine at position 54 (M-5-U54) in all tRNAs. This chain is Methylenetetrahydrofolate--tRNA-(uracil-5-)-methyltransferase TrmFO, found in Lawsonia intracellularis (strain PHE/MN1-00).